The primary structure comprises 151 residues: 3-dehydroquinate dehydratase (151 aa).

Residue Tyr-24 is the Proton acceptor of the active site. Residues Asn-76, His-82, and Asp-89 each coordinate substrate. His-102 serves as the catalytic Proton donor. Residues 103–104 (VS) and Arg-113 each bind substrate.

It belongs to the type-II 3-dehydroquinase family. As to quaternary structure, homododecamer.

The enzyme catalyses 3-dehydroquinate = 3-dehydroshikimate + H2O. The protein operates within metabolic intermediate biosynthesis; chorismate biosynthesis; chorismate from D-erythrose 4-phosphate and phosphoenolpyruvate: step 3/7. In terms of biological role, catalyzes a trans-dehydration via an enolate intermediate. The protein is 3-dehydroquinate dehydratase of Rhodopseudomonas palustris (strain ATCC BAA-98 / CGA009).